Consider the following 21-residue polypeptide: GLLGSIGKVLGGYLAEKLKPK.

In terms of tissue distribution, expressed by the skin dorsal glands.

It is found in the secreted. Functionally, has no antimicrobial activity. Strongly inhibits the formation of NO by neuronal nitric oxide synthase at micromolar concentrations. The chain is Dahlein-5.4 from Ranoidea dahlii (Dahl's aquatic frog).